Reading from the N-terminus, the 227-residue chain is Fibrillarin-like rRNA/tRNA 2'-O-methyltransferase (227 aa).

S-adenosyl-L-methionine-binding positions include 86–87 (TT), 105–106 (EF), 130–131 (DA), and 150–153 (DVAQ).

The protein belongs to the methyltransferase superfamily. Fibrillarin family. As to quaternary structure, interacts with nop5. Component of box C/D small ribonucleoprotein (sRNP) particles that contain rpl7ae, FlpA and nop5, plus a guide RNA.

Involved in pre-rRNA and tRNA processing. Utilizes the methyl donor S-adenosyl-L-methionine to catalyze the site-specific 2'-hydroxyl methylation of ribose moieties in rRNA and tRNA. Site specificity is provided by a guide RNA that base pairs with the substrate. Methylation occurs at a characteristic distance from the sequence involved in base pairing with the guide RNA. The protein is Fibrillarin-like rRNA/tRNA 2'-O-methyltransferase of Pyrococcus abyssi (strain GE5 / Orsay).